Here is a 262-residue protein sequence, read N- to C-terminus: 3-methyl-2-oxobutanoate hydroxymethyltransferase (262 aa).

Residues Asp-44 and Asp-83 each contribute to the Mg(2+) site. Residues 44-45, Asp-83, and Lys-112 each bind 3-methyl-2-oxobutanoate; that span reads DS. Glu-114 contributes to the Mg(2+) binding site. The Proton acceptor role is filled by Glu-181.

It belongs to the PanB family. As to quaternary structure, homodecamer; pentamer of dimers. It depends on Mg(2+) as a cofactor.

It is found in the cytoplasm. The catalysed reaction is 3-methyl-2-oxobutanoate + (6R)-5,10-methylene-5,6,7,8-tetrahydrofolate + H2O = 2-dehydropantoate + (6S)-5,6,7,8-tetrahydrofolate. Its pathway is cofactor biosynthesis; (R)-pantothenate biosynthesis; (R)-pantoate from 3-methyl-2-oxobutanoate: step 1/2. Its function is as follows. Catalyzes the reversible reaction in which hydroxymethyl group from 5,10-methylenetetrahydrofolate is transferred onto alpha-ketoisovalerate to form ketopantoate. This is 3-methyl-2-oxobutanoate hydroxymethyltransferase from Thiobacillus denitrificans (strain ATCC 25259 / T1).